The primary structure comprises 306 residues: Lipid A biosynthesis lauroyltransferase (306 aa).

A helical membrane pass occupies residues 17 to 37 (WLTWLGIGVLWLVVQLPYPVI). The HXXXXD motif signature appears at 132–137 (HFLTLE).

This sequence belongs to the LpxL/LpxM/LpxP family. Monomer.

It is found in the cell inner membrane. It carries out the reaction dodecanoyl-[ACP] + alpha-Kdo-(2-&gt;4)-alpha-Kdo-(2-&gt;6)-lipid IVA (E. coli) = alpha-Kdo-(2-&gt;4)-alpha-Kdo-(2-&gt;6)-(dodecanoyl)-lipid IVA (E. coli) + holo-[ACP]. It functions in the pathway glycolipid biosynthesis; KDO(2)-lipid A biosynthesis; KDO(2)-lipid A from CMP-3-deoxy-D-manno-octulosonate and lipid IV(A): step 3/4. The protein operates within bacterial outer membrane biogenesis; lipopolysaccharide biosynthesis. Its function is as follows. Catalyzes the transfer of laurate from lauroyl-[acyl-carrier-protein] (ACP) to Kdo(2)-lipid IV(A) to form Kdo(2)-(lauroyl)-lipid IV(A). Has 10 fold selectivity for lauroyl-ACP over myristoyl-ACP. In vitro, can also catalyze a slow second acylation reaction leading to the formation of Kdo(2)-(dilauroyl)-lipid IV(A). The chain is Lipid A biosynthesis lauroyltransferase from Escherichia coli (strain K12).